We begin with the raw amino-acid sequence, 420 residues long: Serine--tRNA ligase (420 aa).

227–229 (TSE) is an L-serine binding site. ATP is bound by residues 258-260 (RRE) and Val274. Glu281 is a binding site for L-serine. ATP is bound at residue 345 to 348 (ELTS). Residue Thr380 participates in L-serine binding.

The protein belongs to the class-II aminoacyl-tRNA synthetase family. Type-1 seryl-tRNA synthetase subfamily. As to quaternary structure, homodimer. The tRNA molecule binds across the dimer.

It localises to the cytoplasm. The enzyme catalyses tRNA(Ser) + L-serine + ATP = L-seryl-tRNA(Ser) + AMP + diphosphate + H(+). The catalysed reaction is tRNA(Sec) + L-serine + ATP = L-seryl-tRNA(Sec) + AMP + diphosphate + H(+). It participates in aminoacyl-tRNA biosynthesis; selenocysteinyl-tRNA(Sec) biosynthesis; L-seryl-tRNA(Sec) from L-serine and tRNA(Sec): step 1/1. Catalyzes the attachment of serine to tRNA(Ser). Is also able to aminoacylate tRNA(Sec) with serine, to form the misacylated tRNA L-seryl-tRNA(Sec), which will be further converted into selenocysteinyl-tRNA(Sec). In Nocardia farcinica (strain IFM 10152), this protein is Serine--tRNA ligase.